A 306-amino-acid polypeptide reads, in one-letter code: Pyridoxal 5'-phosphate synthase subunit PdxS (306 aa).

Aspartate 36 is a D-ribose 5-phosphate binding site. Residue lysine 93 is the Schiff-base intermediate with D-ribose 5-phosphate of the active site. Glycine 165 contacts D-ribose 5-phosphate. Residue arginine 177 participates in D-glyceraldehyde 3-phosphate binding. Residues glycine 226 and 247-248 contribute to the D-ribose 5-phosphate site; that span reads GS.

The protein belongs to the PdxS/SNZ family. As to quaternary structure, in the presence of PdxT, forms a dodecamer of heterodimers.

It carries out the reaction aldehydo-D-ribose 5-phosphate + D-glyceraldehyde 3-phosphate + L-glutamine = pyridoxal 5'-phosphate + L-glutamate + phosphate + 3 H2O + H(+). Its pathway is cofactor biosynthesis; pyridoxal 5'-phosphate biosynthesis. In terms of biological role, catalyzes the formation of pyridoxal 5'-phosphate from ribose 5-phosphate (RBP), glyceraldehyde 3-phosphate (G3P) and ammonia. The ammonia is provided by the PdxT subunit. Can also use ribulose 5-phosphate and dihydroxyacetone phosphate as substrates, resulting from enzyme-catalyzed isomerization of RBP and G3P, respectively. In Corynebacterium urealyticum (strain ATCC 43042 / DSM 7109), this protein is Pyridoxal 5'-phosphate synthase subunit PdxS.